The chain runs to 184 residues: Photosystem I assembly protein Ycf4 (184 aa).

The next 2 helical transmembrane spans lie at 19-39 and 57-77; these read ISNFCWAFILFLGSLGFLLVG and IVFFPQGIVMSFYGIAGLFIS.

The protein belongs to the Ycf4 family.

Its subcellular location is the plastid. It localises to the chloroplast thylakoid membrane. Its function is as follows. Seems to be required for the assembly of the photosystem I complex. The polypeptide is Photosystem I assembly protein Ycf4 (Nicotiana tomentosiformis (Tobacco)).